Reading from the N-terminus, the 706-residue chain is Drebrin (706 aa).

N-acetylalanine is present on Ala-2. Residues 3–134 (GVSFSGHRLE…DAGAIGQRLS (132 aa)) form the ADF-H domain. Phosphoserine occurs at positions 141 and 142. The segment covering 209 to 236 (ERMEQERQEQEERERRYREREQQIEEHR) has biased composition (basic and acidic residues). A disordered region spans residues 209 to 497 (ERMEQERQEQ…AEPAASVTSV (289 aa)). Phosphoserine is present on Ser-241. The segment covering 288–298 (DNPREFFRQQE) has biased composition (basic and acidic residues). Over residues 331-345 (SDSGPSSSSSSSSSP) the composition is skewed to low complexity. Ser-344 is modified (phosphoserine). Positions 357-366 (RTPNLSSSLP) are enriched in polar residues. Phosphothreonine occurs at positions 379 and 383. A compositionally biased stretch (polar residues) spans 382–396 (PTRSPSDSSTASTPI). A phosphoserine mark is found at Ser-385, Ser-387, and Ser-393. Position 394 is a phosphothreonine (Thr-394). The segment covering 411–422 (QPPPPPPPPPPT) has biased composition (pro residues). Positions 453–497 (AAEPPQAQEPPLLQSSPLEDSMCTESPEQAALAAPAEPAASVTSV) are enriched in low complexity. A Phosphoserine modification is found at Ser-468. Thr-550 is modified (phosphothreonine). Positions 633-677 (EPHLLTNGETTQKEGTQASEGYFSQSQEEEFAQSEEPCAKVPPPV) are disordered. Residues 639–651 (NGETTQKEGTQAS) are compositionally biased toward polar residues. At Ser-658 the chain carries Phosphoserine.

In terms of assembly, interacts with RUFY3. Interacts with CXCR4; this interaction is enhanced by antigenic stimulation. Interacts (via ADF-H domain) with ZMYND8 (via N-terminus); the interaction leads to sequestering of ZMYND8 in the cytoplasm. As to expression, expressed in the hippocampus, with expression in the pyramidal cells of CA1, CA2 and CA3 and in the granule cells of the dentate gyrus (at protein level). Highly expressed in brain, also present in stomach and to a lesser degree in kidney, colon, and urinary bladder. The E2 isoform is specifically expressed in adult stomach, kidney, and cultured cells.

It localises to the cytoplasm. The protein resides in the cell projection. It is found in the dendrite. The protein localises to the cell cortex. Its subcellular location is the cell junction. It localises to the growth cone. Its function is as follows. Actin cytoskeleton-organizing protein that plays a role in the formation of cell projections. Required for actin polymerization at immunological synapses (IS) and for the recruitment of the chemokine receptor CXCR4 to IS. Plays a role in dendritic spine morphogenesis and organization, including the localization of the dopamine receptor DRD1 to the dendritic spines. Involved in memory-related synaptic plasticity in the hippocampus. The protein is Drebrin (Dbn1) of Mus musculus (Mouse).